The chain runs to 670 residues: RxLR effector protein PSR2 (670 aa).

Residues 1–17 form the signal peptide; it reads MRLQCVVLFAALTLVAA. The short motif at 39–54 is the RxLR-dEER element; the sequence is RLLRPGNPAGKEDEER. Residue asparagine 57 is glycosylated (N-linked (GlcNAc...) asparagine). The WY1 repeat unit spans residues 79-126; the sequence is KLLKWADAKKPPETVFTRLRLDKTGTQLFDNTDFPVWAAYTRSVAQTD. The segment at 79-670 is 7 X 93 AA tandem repeats; sequence KLLKWADAKK…YSAKFKVRWG (592 aa). The stretch at 127–217 is one LWY2 repeat; that stretch reads SEASAVMLKT…NYMKLSNKEN (91 aa). The LWY3 repeat unit spans residues 218 to 308; it reads PKAQTTLIAT…KYINYYNKEN (91 aa). The LWY4 repeat unit spans residues 309-399; sequence PDEKTTVLAK…KYTENFNLNK (91 aa). The LWY5 repeat unit spans residues 400–492; that stretch reads EINEQVTAIQ…KFLEKYNTAN (93 aa). The LWY6 repeat unit spans residues 493–583; sequence PGKEQTMISG…KYLNAFNDKA (91 aa). Residues 584–670 form an LWY7 repeat; the sequence is PVKKALMIDT…YSAKFKVRWG (87 aa).

It belongs to the RxLR effector family. Interacts with host dsRNA-binding protein DRB4.

Its subcellular location is the secreted. The protein resides in the host cell. In terms of biological role, secreted effector that possesses RNA silencing suppression activity by inhibiting the biogenesis of small RNAs in the host plant to promote enhanced susceptibility of host to the pathogen during infection. Interferes with secondary siRNA production by associating with host dsRNA-binding protein DRB4. Inhibits the host salicylic acid pathway during infection. The protein is RxLR effector protein PSR2 of Phytophthora sojae (Soybean stem and root rot agent).